The sequence spans 214 residues: ATP synthase subunit 5, mitochondrial (214 aa).

The N-terminal 24 residues, 1–24 (MFASRAIRMMSMRPMARTMATKAA), are a transit peptide targeting the mitochondrion.

As to quaternary structure, F-type ATP synthases have 2 components, the catalytic core F(1) and the membrane-embedded component F(0), linked together by a central stalk and a peripheral stalk. The central stalk, also called rotor shaft, is often seen as part of F(1). The peripheral stalk is seen as part of F(0). F(0) contains the membrane channel next to the rotor. F-type ATP synthases form dimers but each monomer functions independently in ATP generation. The dimer consists of 17 different polypeptides: ATP1 (subunit alpha, 3 molecules per monomer, part of F(1)), ATP2 (subunit beta, 3 copies per monomer, part of F(1)), ATP3 (subunit gamma, part of the central stalk), ATP4 (subunit b, part of the peripheral stalk), ATP5/OSCP (subunit 5/OSCP, part of the peripheral stalk), ATP6 (subunit a, part of the peripheral stalk), ATP7 (subunit d, part of the peripheral stalk), ATP8 (subunit 8, part of the peripheral stalk), OLI1 (subunit c, part of the rotor, 10 molecules per monomer), ATP14 (subunit h, part of the peripheral stalk), ATP15 (subunit epsilon, part of the central stalk), ATP16 (subunit delta, part of the central stalk), ATP17 (subunit f, part of the peripheral stalk), ATP18 (subunit i/j, part of the peripheral stalk), ATP19 (subunit k, dimer-specific, at interface between monomers), ATP20 (subunit g, at interface between monomers), TIM11 (subunit e, at interface between monomers).

The protein resides in the mitochondrion inner membrane. In terms of biological role, mitochondrial membrane ATP synthase (F(1)F(0) ATP synthase or Complex V) produces ATP from ADP in the presence of a proton gradient across the membrane which is generated by electron transport complexes of the respiratory chain. F-type ATP synthases consist of two structural domains, F(1) - containing the extramembraneous catalytic core, and F(0) - containing the membrane proton channel, linked together by a central stalk and a peripheral stalk. During catalysis, ATP synthesis in the catalytic domain of F(1) is coupled via a rotary mechanism of the central stalk subunits to proton translocation. Part of the complex F(0) domain and the peripheral stalk, which acts as a stator to hold the catalytic alpha/ATP1(3)beta/ATP2(3) subcomplex and subunit a/ATP6 static relative to the rotary elements. The chain is ATP synthase subunit 5, mitochondrial from Yarrowia lipolytica (strain CLIB 122 / E 150) (Yeast).